The following is a 478-amino-acid chain: Glutamate--tRNA ligase (478 aa).

The 'HIGH' region signature appears at 15–25 (PSPTGFLHIGG). Positions 244–248 (KLSKR) match the 'KMSKS' region motif. Lys-247 serves as a coordination point for ATP.

The protein belongs to the class-I aminoacyl-tRNA synthetase family. Glutamate--tRNA ligase type 1 subfamily. Monomer.

Its subcellular location is the cytoplasm. It catalyses the reaction tRNA(Glu) + L-glutamate + ATP = L-glutamyl-tRNA(Glu) + AMP + diphosphate. Catalyzes the attachment of glutamate to tRNA(Glu) in a two-step reaction: glutamate is first activated by ATP to form Glu-AMP and then transferred to the acceptor end of tRNA(Glu). In Bradyrhizobium sp. (strain ORS 278), this protein is Glutamate--tRNA ligase.